The sequence spans 231 residues: Large ribosomal subunit protein uL1 (231 aa).

It belongs to the universal ribosomal protein uL1 family. In terms of assembly, part of the 50S ribosomal subunit.

Its function is as follows. Binds directly to 23S rRNA. The L1 stalk is quite mobile in the ribosome, and is involved in E site tRNA release. Protein L1 is also a translational repressor protein, it controls the translation of the L11 operon by binding to its mRNA. This is Large ribosomal subunit protein uL1 from Lactobacillus delbrueckii subsp. bulgaricus (strain ATCC 11842 / DSM 20081 / BCRC 10696 / JCM 1002 / NBRC 13953 / NCIMB 11778 / NCTC 12712 / WDCM 00102 / Lb 14).